The primary structure comprises 654 residues: Marinolic acid--CoA ligase (654 aa).

It belongs to the ATP-dependent AMP-binding enzyme family.

The enzyme catalyses ATP + a marinolic acid + CoA = AMP + diphosphate + a marinoloyl-CoA.. It catalyses the reaction ATP + a pseudomonic acid + CoA = AMP + diphosphate + a pseudomonoyl-CoA.. The catalysed reaction is marinolate C + ATP + CoA = marinoloyl-CoA C + AMP + diphosphate. It carries out the reaction pseudomonate C + ATP + CoA = pseudomonoyl-CoA C + AMP + diphosphate. It functions in the pathway antibiotic biosynthesis. Its function is as follows. Acyl-CoA ligase that catalyzes the CoA acylation of pseudomonate C, leading to the formation of pseudomonoyl-CoA C (PAC-CoA). Also shows high activity with pseudomonoyl-CoA A as substrate. In addition, can activate acetic, octanoic, 2,4-dodecadienoic and 2,4-decadienoic acids, although with much lower activity. In vivo, is probably involved in the biosynthesis of thiomarinol, a naturally occurring double-headed antibiotic. In Pseudoalteromonas sp. (strain SANK 73390), this protein is Marinolic acid--CoA ligase.